Reading from the N-terminus, the 204-residue chain is Acyl-homoserine-lactone synthase (204 aa).

This sequence belongs to the autoinducer synthase family.

The enzyme catalyses a fatty acyl-[ACP] + S-adenosyl-L-methionine = an N-acyl-L-homoserine lactone + S-methyl-5'-thioadenosine + holo-[ACP] + H(+). Functionally, required for the synthesis of acyl-HSL autoinducers that bind to SolR. The polypeptide is Acyl-homoserine-lactone synthase (solI) (Ralstonia nicotianae (strain ATCC BAA-1114 / GMI1000) (Ralstonia solanacearum)).